The following is a 275-amino-acid chain: Formamidopyrimidine-DNA glycosylase (275 aa).

P2 functions as the Schiff-base intermediate with DNA in the catalytic mechanism. E3 serves as the catalytic Proton donor. The Proton donor; for beta-elimination activity role is filled by K58. 3 residues coordinate DNA: H93, R111, and R156. Residues 241–275 (FAYDRAGLPCRVCGTPIRQIVQGQRSTYFCPTCQR) form an FPG-type zinc finger. The active-site Proton donor; for delta-elimination activity is the R265.

This sequence belongs to the FPG family. In terms of assembly, monomer. Zn(2+) serves as cofactor.

It carries out the reaction Hydrolysis of DNA containing ring-opened 7-methylguanine residues, releasing 2,6-diamino-4-hydroxy-5-(N-methyl)formamidopyrimidine.. The enzyme catalyses 2'-deoxyribonucleotide-(2'-deoxyribose 5'-phosphate)-2'-deoxyribonucleotide-DNA = a 3'-end 2'-deoxyribonucleotide-(2,3-dehydro-2,3-deoxyribose 5'-phosphate)-DNA + a 5'-end 5'-phospho-2'-deoxyribonucleoside-DNA + H(+). Its function is as follows. Involved in base excision repair of DNA damaged by oxidation or by mutagenic agents. Acts as a DNA glycosylase that recognizes and removes damaged bases. Has a preference for oxidized purines, such as 7,8-dihydro-8-oxoguanine (8-oxoG). Has AP (apurinic/apyrimidinic) lyase activity and introduces nicks in the DNA strand. Cleaves the DNA backbone by beta-delta elimination to generate a single-strand break at the site of the removed base with both 3'- and 5'-phosphates. This is Formamidopyrimidine-DNA glycosylase from Burkholderia vietnamiensis (strain G4 / LMG 22486) (Burkholderia cepacia (strain R1808)).